The primary structure comprises 315 residues: Phosphatidylglycerol--prolipoprotein diacylglyceryl transferase (315 aa).

Helical transmembrane passes span Phe-19 to Leu-39 and Val-93 to Leu-113. Arg-141 serves as a coordination point for a 1,2-diacyl-sn-glycero-3-phospho-(1'-sn-glycerol). 2 helical membrane passes run Leu-188 to Ile-208 and Met-256 to Tyr-276.

The protein belongs to the Lgt family.

The protein localises to the cell membrane. It catalyses the reaction L-cysteinyl-[prolipoprotein] + a 1,2-diacyl-sn-glycero-3-phospho-(1'-sn-glycerol) = an S-1,2-diacyl-sn-glyceryl-L-cysteinyl-[prolipoprotein] + sn-glycerol 1-phosphate + H(+). It functions in the pathway protein modification; lipoprotein biosynthesis (diacylglyceryl transfer). Functionally, catalyzes the transfer of the diacylglyceryl group from phosphatidylglycerol to the sulfhydryl group of the N-terminal cysteine of a prolipoprotein, the first step in the formation of mature lipoproteins. This chain is Phosphatidylglycerol--prolipoprotein diacylglyceryl transferase, found in Bifidobacterium longum subsp. infantis (strain ATCC 15697 / DSM 20088 / JCM 1222 / NCTC 11817 / S12).